The following is a 1040-amino-acid chain: Multidrug resistance protein MdtB (1040 aa).

Transmembrane regions (helical) follow at residues 16-36 (FILRPVATTLLMVAILLAGII), 347-367 (LMLAIALVVMIIYLFLRNIPA), 369-389 (IIPAVAVPLSLVGTFAVMVFL), 396-416 (LTLMALTIATGFVVDDAIVVI), 440-460 (IGFTIISLTFSLIAVLIPLLF), 472-492 (FAVTLAVAILISAVVSLTLTP), 537-557 (WLTLGVALGTLALTVLLWIFI), 863-883 (LGSTLWLILASVVAMYIVLGV), 888-908 (FIHPITILSTLPTAGVGALLA), 911-931 (IAGAELDVIAIIGIILLIGIV), 968-988 (ILMTTLAALLGALPLMLSTGV), and 998-1018 (IGMVGGLLVSQVLTLFTTPVI).

It belongs to the resistance-nodulation-cell division (RND) (TC 2.A.6) family. MdtB subfamily. As to quaternary structure, part of a tripartite efflux system composed of MdtA, MdtB and MdtC. MdtB forms a heteromultimer with MdtC.

Its subcellular location is the cell inner membrane. This chain is Multidrug resistance protein MdtB, found in Cronobacter sakazakii (strain ATCC BAA-894) (Enterobacter sakazakii).